The primary structure comprises 171 residues: MTQRPERPSEQDGFFWKTKTLEQMSSSEWESLCDGCARCCLEKLEDEDTGDIYFTHVSCRLLDAGLCACKDYANRSEQVSDCVRLTPDNVRTLNWLPPSCGYRLVAEGRDLYWWHPLISGDPNTVHEAGVSVRGRVRGTEDEIPDSELEDHIAQWPVRLPKRAQLKKPPRS.

It belongs to the UPF0260 family.

This chain is UPF0260 protein Nham_1404, found in Nitrobacter hamburgensis (strain DSM 10229 / NCIMB 13809 / X14).